The sequence spans 312 residues: MTKLSTTKICVKSPAKINLHLEIIGKREDGYHELAMIMQNIDLFDYIEFENNQIGDIELKSNNKDLSLKDDNLIIKAANYVKDISKKKDLGANIFLKKNIPIGAGLAGGSSNAAATIIGLNKLWDLDLDNETMLSLSSKLGSDVPFFINGGCQFCFGRGEILENYNSKFDYGVILLKNPNISISTADTYKKYSKEYCSNFLTESEKTNDIRNDLRINGFNDLNSSNQIIKVKNDLQIIVEKENDSVKKALYLLSNLQNCLSFSMSGSGPTCFALFKDINKANEVFEQNHKMFNNNGFEAWVCKLINSGITFL.

Residue Lys-16 is part of the active site. 101-111 (PIGAGLAGGSS) is an ATP binding site. Asp-143 is an active-site residue.

This sequence belongs to the GHMP kinase family. IspE subfamily.

It catalyses the reaction 4-CDP-2-C-methyl-D-erythritol + ATP = 4-CDP-2-C-methyl-D-erythritol 2-phosphate + ADP + H(+). It participates in isoprenoid biosynthesis; isopentenyl diphosphate biosynthesis via DXP pathway; isopentenyl diphosphate from 1-deoxy-D-xylulose 5-phosphate: step 3/6. In terms of biological role, catalyzes the phosphorylation of the position 2 hydroxy group of 4-diphosphocytidyl-2C-methyl-D-erythritol. The protein is 4-diphosphocytidyl-2-C-methyl-D-erythritol kinase of Prochlorococcus marinus (strain MIT 9515).